A 207-amino-acid polypeptide reads, in one-letter code: Uracil phosphoribosyltransferase (207 aa).

5-phospho-alpha-D-ribose 1-diphosphate contacts are provided by residues Arg-77, Arg-102, and 129–137 (DPMLATGGS). Residues Ile-192 and 197-199 (GDA) contribute to the uracil site. 5-phospho-alpha-D-ribose 1-diphosphate is bound at residue Asp-198.

The protein belongs to the UPRTase family. It depends on Mg(2+) as a cofactor.

The catalysed reaction is UMP + diphosphate = 5-phospho-alpha-D-ribose 1-diphosphate + uracil. The protein operates within pyrimidine metabolism; UMP biosynthesis via salvage pathway; UMP from uracil: step 1/1. Allosterically activated by GTP. Catalyzes the conversion of uracil and 5-phospho-alpha-D-ribose 1-diphosphate (PRPP) to UMP and diphosphate. This Ureaplasma urealyticum serovar 10 (strain ATCC 33699 / Western) protein is Uracil phosphoribosyltransferase.